Reading from the N-terminus, the 810-residue chain is MPMDVILVLWFCVCTARTVLGFGMDPDLQLDIISELDLVNTTLGVTQVAGLHNASKAFLFQDVQREIHSAPHVSEKLIQLFRNKSEFTFLATVQQKPSTSGVILSIRELEHSYFELESSGPREEIRYHYIHGGKPRTEALPYRMADGQWHKVALSVSASHLLLHIDCNRIYERVIDPPETNLPPGSNLWLGQRNQKHGFFKGIIQDGKIIFMPNGFITQCPNLNRTCPTCSDFLSLVQGIMDLQELLAKMTAKLNYAETRLGQLENCHCEKTCQVSGLLYRDQDSWVDGDNCRNCTCKSGAVECRRMSCPPLNCSPDSLPVHISGQCCKVCRPKCIYGGKVLAEGQRILTKTCRECRGGVLVKITEACPPLNCSAKDHILPENQCCRVCPGHNFCAEAPKCGENSECKNWNTKATCECKNGYISVQGNSAYCEDIDECAAKMHYCHANTVCVNLPGLYRCDCVPGYIRVDDFSCTEHDDCGSGQHNCDKNAICTNTVQGHSCTCQPGYVGNGTICKAFCEEGCRYGGTCVAPNKCVCPSGFTGSHCEKDIDECAEGFVECHNHSRCVNLPGWYHCECRSGFHDDGTYSLSGESCIDIDECALRTHTCWNDSACINLAGGFDCLCPSGPSCSGDCPHEGGLKHNGQVWILREDRCSVCSCKDGKIFCRRTACDCQNPNVDLFCCPECDTRVTSQCLDQSGQKLYRSGDNWTHSCQQCRCLEGEADCWPLACPSLGCEYTAMFEGECCPRCVSDPCLADNIAYDIRKTCLDSFGVSRLSGAVWTMAGSPCTTCKCKNGRVCCSVDLECIENN.

A signal peptide spans 1-21 (MPMDVILVLWFCVCTARTVLG). Residues Asn-40, Asn-53, Asn-83, Asn-224, Asn-294, and Asn-372 are each glycosylated (N-linked (GlcNAc...) asparagine). A Laminin G-like domain is found at 57 to 227 (AFLFQDVQRE…TQCPNLNRTC (171 aa)). The VWFC 1 domain maps to 271-332 (KTCQVSGLLY…ISGQCCKVCR (62 aa)). 3 cysteine pairs are disulfide-bonded: Cys-395–Cys-407, Cys-401–Cys-416, and Cys-418–Cys-432. Ca(2+)-binding residues include Asp-434, Ile-435, and Glu-437. Residues 434–475 (DIDECAAKMHYCHANTVCVNLPGLYRCDCVPGYIRVDDFSCT) enclose the EGF-like 1; calcium-binding domain. Cystine bridges form between Cys-438–Cys-451, Cys-445–Cys-460, Cys-462–Cys-474, Cys-480–Cys-493, Cys-487–Cys-502, Cys-504–Cys-515, Cys-519–Cys-529, Cys-523–Cys-535, Cys-537–Cys-546, Cys-553–Cys-566, Cys-560–Cys-575, Cys-577–Cys-594, Cys-600–Cys-613, Cys-607–Cys-622, and Cys-624–Cys-630. Asn-453, Leu-454, and Leu-457 together coordinate Ca(2+). The EGF-like 2; calcium-binding domain occupies 476 to 516 (EHDDCGSGQHNCDKNAICTNTVQGHSCTCQPGYVGNGTICK). A glycan (N-linked (GlcNAc...) asparagine) is linked at Asn-511. Residues 517–547 (AFCEEGCRYGGTCVAPNKCVCPSGFTGSHCE) form the EGF-like 3 domain. In terms of domain architecture, EGF-like 4; calcium-binding spans 549-587 (DIDECAEGFVECHNHSRCVNLPGWYHCECRSGFHDDGTY). N-linked (GlcNAc...) asparagine glycosylation occurs at Asn-562. One can recognise an EGF-like 5; calcium-binding domain in the interval 596-631 (DIDECALRTHTCWNDSACINLAGGFDCLCPSGPSCS). Asn-609 is a glycosylation site (N-linked (GlcNAc...) asparagine). VWFC domains lie at 632–687 (GDCP…PECD) and 692–750 (SQCL…PRCV). N-linked (GlcNAc...) asparagine glycosylation occurs at Asn-708.

Interacts with ATRAID; the interaction promotes osteoblast cell differentiation and mineralization. Homotrimer. Binds to PKC beta-1. Interacts with ROBO3.

It localises to the cytoplasm. The protein localises to the nucleus envelope. Its subcellular location is the secreted. Plays a role in the control of cell growth and differentiation. Promotes osteoblast cell differentiation and terminal mineralization. This Rattus norvegicus (Rat) protein is Protein kinase C-binding protein NELL1 (Nell1).